A 357-amino-acid chain; its full sequence is sn-glycerol-3-phosphate import ATP-binding protein UgpC (357 aa).

The region spanning 4–235 is the ABC transporter domain; the sequence is LKLQAVTKSY…PASLFVASFI (232 aa). Position 37-44 (37-44) interacts with ATP; that stretch reads GPSGCGKS.

It belongs to the ABC transporter superfamily. sn-glycerol-3-phosphate importer (TC 3.A.1.1.3) family. As to quaternary structure, the complex is composed of two ATP-binding proteins (UgpC), two transmembrane proteins (UgpA and UgpE) and a solute-binding protein (UgpB).

It is found in the cell inner membrane. It catalyses the reaction sn-glycerol 3-phosphate(out) + ATP + H2O = sn-glycerol 3-phosphate(in) + ADP + phosphate + H(+). Its function is as follows. Part of the ABC transporter complex UgpBAEC involved in sn-glycerol-3-phosphate (G3P) import. Responsible for energy coupling to the transport system. The polypeptide is sn-glycerol-3-phosphate import ATP-binding protein UgpC (Pectobacterium atrosepticum (strain SCRI 1043 / ATCC BAA-672) (Erwinia carotovora subsp. atroseptica)).